The following is a 156-amino-acid chain: ATP synthase subunit b (156 aa).

Residues 7-27 (LFVQAIVFLILVLFTMKFVWP) form a helical membrane-spanning segment.

The protein belongs to the ATPase B chain family. In terms of assembly, F-type ATPases have 2 components, F(1) - the catalytic core - and F(0) - the membrane proton channel. F(1) has five subunits: alpha(3), beta(3), gamma(1), delta(1), epsilon(1). F(0) has three main subunits: a(1), b(2) and c(10-14). The alpha and beta chains form an alternating ring which encloses part of the gamma chain. F(1) is attached to F(0) by a central stalk formed by the gamma and epsilon chains, while a peripheral stalk is formed by the delta and b chains.

The protein localises to the cell inner membrane. F(1)F(0) ATP synthase produces ATP from ADP in the presence of a proton or sodium gradient. F-type ATPases consist of two structural domains, F(1) containing the extramembraneous catalytic core and F(0) containing the membrane proton channel, linked together by a central stalk and a peripheral stalk. During catalysis, ATP synthesis in the catalytic domain of F(1) is coupled via a rotary mechanism of the central stalk subunits to proton translocation. Its function is as follows. Component of the F(0) channel, it forms part of the peripheral stalk, linking F(1) to F(0). This Acidovorax sp. (strain JS42) protein is ATP synthase subunit b.